Consider the following 394-residue polypeptide: Elongation factor Tu (394 aa).

The tr-type G domain maps to 10–204; it reads KEHVNVGTIG…AVDTYIENPV (195 aa). Residues 19-26 form a G1 region; it reads GHVDHGKT. 19–26 contacts GTP; sequence GHVDHGKT. Residue threonine 26 coordinates Mg(2+). A G2 region spans residues 60–64; the sequence is GITIN. The interval 81–84 is G3; it reads DCPG. GTP contacts are provided by residues 81–85 and 136–139; these read DCPGH and NKCD. The G4 stretch occupies residues 136-139; the sequence is NKCD. Positions 174–176 are G5; it reads SAL.

It belongs to the TRAFAC class translation factor GTPase superfamily. Classic translation factor GTPase family. EF-Tu/EF-1A subfamily. As to quaternary structure, monomer.

Its subcellular location is the cytoplasm. The catalysed reaction is GTP + H2O = GDP + phosphate + H(+). Its function is as follows. GTP hydrolase that promotes the GTP-dependent binding of aminoacyl-tRNA to the A-site of ribosomes during protein biosynthesis. The sequence is that of Elongation factor Tu from Mycoplasmopsis synoviae (strain 53) (Mycoplasma synoviae).